The chain runs to 202 residues: Holliday junction branch migration complex subunit RuvA (202 aa).

Positions 1-64 (MIGRLRGSLA…EDAHLLYGFY (64 aa)) are domain I. Residues 65-143 (EKRERELFRE…AWESLPGTFT (79 aa)) are domain II. Positions 144 to 153 (LVSNGPNQAE) are flexible linker. Residues 154–202 (PVASAESDAVSALISLGYKPQEASKAVSAIKEKDLSSADLIRRALKGMG) form a domain III region.

It belongs to the RuvA family. In terms of assembly, homotetramer. Forms an RuvA(8)-RuvB(12)-Holliday junction (HJ) complex. HJ DNA is sandwiched between 2 RuvA tetramers; dsDNA enters through RuvA and exits via RuvB. An RuvB hexamer assembles on each DNA strand where it exits the tetramer. Each RuvB hexamer is contacted by two RuvA subunits (via domain III) on 2 adjacent RuvB subunits; this complex drives branch migration. In the full resolvosome a probable DNA-RuvA(4)-RuvB(12)-RuvC(2) complex forms which resolves the HJ.

Its subcellular location is the cytoplasm. Its function is as follows. The RuvA-RuvB-RuvC complex processes Holliday junction (HJ) DNA during genetic recombination and DNA repair, while the RuvA-RuvB complex plays an important role in the rescue of blocked DNA replication forks via replication fork reversal (RFR). RuvA specifically binds to HJ cruciform DNA, conferring on it an open structure. The RuvB hexamer acts as an ATP-dependent pump, pulling dsDNA into and through the RuvAB complex. HJ branch migration allows RuvC to scan DNA until it finds its consensus sequence, where it cleaves and resolves the cruciform DNA. This Pseudomonas savastanoi pv. phaseolicola (strain 1448A / Race 6) (Pseudomonas syringae pv. phaseolicola (strain 1448A / Race 6)) protein is Holliday junction branch migration complex subunit RuvA.